Consider the following 908-residue polypeptide: Zinc finger and BTB domain-containing protein 41 (908 aa).

The tract at residues 38–59 (TQAPERPTPEAAQRCQELPPSP) is disordered. A BTB domain is found at 89–153 (CDLLIIVEGK…LYTSEFFVYK (65 aa)). Residues 208-231 (HQCKFCSRHFCYKKSLENHLAKTH) form a C2H2-type 1 zinc finger. A compositionally biased stretch (basic residues) spans 252–261 (RRSKRNRKCP). Positions 252–344 (RRSKRNRKCP…EAGDSAGSIH (93 aa)) are disordered. A compositionally biased stretch (acidic residues) spans 267–276 (TSDDEQESGD). The segment covering 279–296 (DNLHQESSEKERSDRNDS) has biased composition (basic and acidic residues). Residues 297-336 (EDPGSEYNAEDEELEEEVSDEDSDTEQSDKDNDAEEEPEA) show a composition bias toward acidic residues. C2H2-type zinc fingers lie at residues 360–382 (LQCP…TRVH), 388–410 (FECD…RKKH), 421–444 (HKCP…KRFH), 462–484 (WKCD…MILH), 490–513 (FKCT…EKFH), 517–540 (FPCD…ECTH), 546–568 (WTCF…LRIH), 574–596 (HLCS…LRVH), 602–624 (YECD…KKIH), 630–653 (HQCE…KSVH), 667–689 (HQCD…FRTH), 695–717 (YKCQ…LVIH), and 723–746 (FNCQ…DHVH).

Its subcellular location is the nucleus. Its function is as follows. May be involved in transcriptional regulation. The chain is Zinc finger and BTB domain-containing protein 41 (Zbtb41) from Mus musculus (Mouse).